We begin with the raw amino-acid sequence, 690 residues long: Putative glycerophosphocholine phosphodiesterase GPCPD1 homolog 1 (690 aa).

Positions 1-122 (MDQDYKAHFK…RKNITDQFGS (122 aa)) constitute a CBM20 domain. Residues 344–654 (MLQIGHRGMG…DRIGEDEVLK (311 aa)) form the GP-PDE domain. The disordered stretch occupies residues 670–690 (ARSQHNSRSPSMSRRCMSTVE). The segment covering 676–690 (SRSPSMSRRCMSTVE) has biased composition (low complexity).

It belongs to the glycerophosphoryl diester phosphodiesterase family.

This is Putative glycerophosphocholine phosphodiesterase GPCPD1 homolog 1 from Caenorhabditis elegans.